Consider the following 369-residue polypeptide: Anhydro-N-acetylmuramic acid kinase (369 aa).

ATP is bound at residue G12–D19.

Belongs to the anhydro-N-acetylmuramic acid kinase family.

The catalysed reaction is 1,6-anhydro-N-acetyl-beta-muramate + ATP + H2O = N-acetyl-D-muramate 6-phosphate + ADP + H(+). It functions in the pathway amino-sugar metabolism; 1,6-anhydro-N-acetylmuramate degradation. It participates in cell wall biogenesis; peptidoglycan recycling. In terms of biological role, catalyzes the specific phosphorylation of 1,6-anhydro-N-acetylmuramic acid (anhMurNAc) with the simultaneous cleavage of the 1,6-anhydro ring, generating MurNAc-6-P. Is required for the utilization of anhMurNAc either imported from the medium or derived from its own cell wall murein, and thus plays a role in cell wall recycling. The protein is Anhydro-N-acetylmuramic acid kinase of Shewanella halifaxensis (strain HAW-EB4).